The following is a 409-amino-acid chain: Tryptophan synthase beta chain (409 aa).

Lys95 carries the N6-(pyridoxal phosphate)lysine modification.

The protein belongs to the TrpB family. Tetramer of two alpha and two beta chains. Requires pyridoxal 5'-phosphate as cofactor.

It carries out the reaction (1S,2R)-1-C-(indol-3-yl)glycerol 3-phosphate + L-serine = D-glyceraldehyde 3-phosphate + L-tryptophan + H2O. It participates in amino-acid biosynthesis; L-tryptophan biosynthesis; L-tryptophan from chorismate: step 5/5. The beta subunit is responsible for the synthesis of L-tryptophan from indole and L-serine. This is Tryptophan synthase beta chain from Pseudomonas syringae pv. tomato (strain ATCC BAA-871 / DC3000).